A 403-amino-acid chain; its full sequence is 8-amino-7-oxononanoate synthase (403 aa).

Position 25 (Arg-25) interacts with substrate. 112–113 serves as a coordination point for pyridoxal 5'-phosphate; the sequence is GY. Position 137 (His-137) interacts with substrate. Ser-182, His-210, and Thr-239 together coordinate pyridoxal 5'-phosphate. Lys-242 is subject to N6-(pyridoxal phosphate)lysine. Thr-358 contacts substrate.

Belongs to the class-II pyridoxal-phosphate-dependent aminotransferase family. BioF subfamily. Homodimer. It depends on pyridoxal 5'-phosphate as a cofactor.

The enzyme catalyses 6-carboxyhexanoyl-[ACP] + L-alanine + H(+) = (8S)-8-amino-7-oxononanoate + holo-[ACP] + CO2. Its pathway is cofactor biosynthesis; biotin biosynthesis. Catalyzes the decarboxylative condensation of pimeloyl-[acyl-carrier protein] and L-alanine to produce 8-amino-7-oxononanoate (AON), [acyl-carrier protein], and carbon dioxide. This chain is 8-amino-7-oxononanoate synthase, found in Marinomonas sp. (strain MWYL1).